A 150-amino-acid chain; its full sequence is UPF0178 protein BceJ2315_16760 (150 aa).

Belongs to the UPF0178 family.

The chain is UPF0178 protein BceJ2315_16760 from Burkholderia cenocepacia (strain ATCC BAA-245 / DSM 16553 / LMG 16656 / NCTC 13227 / J2315 / CF5610) (Burkholderia cepacia (strain J2315)).